The following is a 122-amino-acid chain: Large ribosomal subunit protein uL14c (122 aa).

The protein belongs to the universal ribosomal protein uL14 family. As to quaternary structure, part of the 50S ribosomal subunit.

The protein localises to the plastid. It localises to the chloroplast. Binds to 23S rRNA. The sequence is that of Large ribosomal subunit protein uL14c from Physcomitrium patens (Spreading-leaved earth moss).